The primary structure comprises 366 residues: Chorismate synthase (366 aa).

Positions 48 and 54 each coordinate NADP(+). Residues 125–127, 238–239, glycine 278, 293–297, and arginine 319 each bind FMN; these read RSS, NA, and KPTSS.

It belongs to the chorismate synthase family. Homotetramer. The cofactor is FMNH2.

It catalyses the reaction 5-O-(1-carboxyvinyl)-3-phosphoshikimate = chorismate + phosphate. It participates in metabolic intermediate biosynthesis; chorismate biosynthesis; chorismate from D-erythrose 4-phosphate and phosphoenolpyruvate: step 7/7. In terms of biological role, catalyzes the anti-1,4-elimination of the C-3 phosphate and the C-6 proR hydrogen from 5-enolpyruvylshikimate-3-phosphate (EPSP) to yield chorismate, which is the branch point compound that serves as the starting substrate for the three terminal pathways of aromatic amino acid biosynthesis. This reaction introduces a second double bond into the aromatic ring system. The polypeptide is Chorismate synthase (Methylococcus capsulatus (strain ATCC 33009 / NCIMB 11132 / Bath)).